The following is an 86-amino-acid chain: Cell division topological specificity factor (86 aa).

This sequence belongs to the MinE family.

Prevents the cell division inhibition by proteins MinC and MinD at internal division sites while permitting inhibition at polar sites. This ensures cell division at the proper site by restricting the formation of a division septum at the midpoint of the long axis of the cell. This chain is Cell division topological specificity factor, found in Shewanella piezotolerans (strain WP3 / JCM 13877).